A 420-amino-acid polypeptide reads, in one-letter code: Phospholipase A1-II 3 (420 aa).

The signal sequence occupies residues 1-21 (MCCFLLVSVLLATTLTDVASA). N231 carries an N-linked (GlcNAc...) asparagine glycan. S240 serves as the catalytic Acyl-ester intermediate. Residue S240 is the Charge relay system of the active site. An N-linked (GlcNAc...) asparagine glycan is attached at N294. Catalysis depends on charge relay system residues D305 and H343. Residues 367–388 (VVDRDLALVNKEVDALRDEYQV) are a coiled coil. N403 carries N-linked (GlcNAc...) asparagine glycosylation.

Belongs to the AB hydrolase superfamily. Lipase family.

The protein localises to the secreted. In terms of biological role, acylhydrolase that catalyzes the hydrolysis of phospholipids at the sn-1 position. The protein is Phospholipase A1-II 3 of Oryza sativa subsp. indica (Rice).